The chain runs to 558 residues: Xylulose kinase 2 (558 aa).

Substrate-binding positions include Asp16, 20–23 (QSMK), Ser111, and Asp283. ATP-binding positions include Thr305 and 456–460 (GASAN).

Belongs to the FGGY kinase family. A divalent metal cation is required as a cofactor.

The protein localises to the cytoplasm. The enzyme catalyses D-xylulose + ATP = D-xylulose 5-phosphate + ADP + H(+). Its pathway is isoprenoid biosynthesis; carotenoid biosynthesis. Repressed by oxo-clomazone (keto-clomazone), a bleaching herbicide. In terms of biological role, mediates 1-deoxy-D-xylulose (DX) phosphorylation in the cytoplasm prior to the translocation of 1-deoxy-D-xylulose 5-phosphate into plastids. Can also phosphorylate D-xylulose (Xyl). Uses preferentially ATP as cosubstrate. The chain is Xylulose kinase 2 from Arabidopsis thaliana (Mouse-ear cress).